The chain runs to 176 residues: DNA repair RAD52-like protein 1, mitochondrial (176 aa).

Residues 1 to 37 constitute a mitochondrion transit peptide; sequence MAGLGLRLKAAKWTLRSGSGAVSREWSSEMGKGVRRF.

This sequence belongs to the RAD52 family. Interacts with WHY2. Expressed in root vascular tissue, tips of primary and secondary roots, young leaves, hydathodes, stomatal guard cells, cauline leaves, flower buds, stipules, carpels, pistils and anther filaments.

Its subcellular location is the mitochondrion. It is found in the nucleus. Its function is as follows. Plant-specific single-stranded DNA-binding protein required for efficient heterologous recombination-dependent DNA repair in nuclear and mitochondrial compartments. Forms large nucleo-protein complexes with WHY2 in mitochondria. Binds ssDNA with high affinity, but with little sequence specificity. Involved in double-stranded DNA break repair. Involved in the hydrolytic splicing pathway in mitochondrion. Facilitates the excision of two cis-spliced group II introns, NAD1 intron 2 and NAD2 intron 1. The polypeptide is DNA repair RAD52-like protein 1, mitochondrial (Arabidopsis thaliana (Mouse-ear cress)).